We begin with the raw amino-acid sequence, 377 residues long: Trichodiene synthase (377 aa).

It belongs to the trichodiene synthase family.

The catalysed reaction is (2E,6E)-farnesyl diphosphate = trichodiene + diphosphate. The protein operates within sesquiterpene biosynthesis; trichothecene biosynthesis. Functionally, TS is a member of the terpene cyclase group of enzymes. It catalyzes the isomerization and cyclization of farnesyl pyro-phosphate to form trichodiene, the first cyclic intermediate in the biosynthetic pathway for trichothecenes. It serves to branch trichothecene biosynthesis from the isoprenoid pathway. This chain is Trichodiene synthase (TRI5), found in Fusarium poae.